Consider the following 214-residue polypeptide: Urease accessory protein UreF (214 aa).

The disordered stretch occupies residues 70–95 (AAAGEAGDAETDARTPSPAARAASRA). The span at 83–95 (RTPSPAARAASRA) shows a compositional bias: low complexity.

Belongs to the UreF family. As to quaternary structure, ureD, UreF and UreG form a complex that acts as a GTP-hydrolysis-dependent molecular chaperone, activating the urease apoprotein by helping to assemble the nickel containing metallocenter of UreC. The UreE protein probably delivers the nickel.

The protein localises to the cytoplasm. In terms of biological role, required for maturation of urease via the functional incorporation of the urease nickel metallocenter. The protein is Urease accessory protein UreF of Mycolicibacterium vanbaalenii (strain DSM 7251 / JCM 13017 / BCRC 16820 / KCTC 9966 / NRRL B-24157 / PYR-1) (Mycobacterium vanbaalenii).